Consider the following 205-residue polypeptide: Protein Nef (205 aa).

Gly2 is lipidated: N-myristoyl glycine; by host. Ser6 carries the phosphoserine; by host modification. Residues 62–65 form an acidic; interacts with host PACS1 and PACS2; stabilizes the interaction of NEF/MHC-I with host AP1M1; necessary for MHC-I internalization region; sequence EEEE. The interval 69 to 78 is SH3-binding; interaction with Src family tyrosine kinases; that stretch reads PVRPQVPVRP. Residues 72-75 carry the PxxP; stabilizes the interaction of NEF/MHC-I with host AP1M1; necessary for MHC-I internalization motif; sequence PQVP. Residues 108–124 form a mediates dimerization, Nef-PTE1 interaction region; the sequence is DTLDLWVYHTQGYFPDW. Residues 148 to 180 are binding to ATP6V1H; the sequence is VDPEEVEKANEGENNCLLHPMSQHGMEDEDREV. Positions 164-165 match the Dileucine internalization motif; necessary for CD4 internalization motif; sequence LL. Residues 174–175 carry the Diacidic; necessary for CD4 internalization motif; sequence ED.

This sequence belongs to the lentivirus primate group Nef protein family. As to quaternary structure, monomer; cytosolic form. Homodimer; membrane bound form. Interacts with Nef associated p21-activated kinase (PAK2); this interaction activates PAK2. Associates with the Nef-MHC-I-AP1 complex; this complex is required for MHC-I internalization. Interacts (via C-terminus) with host PI3-kinase. Interacts with host PACS1; this interaction seems to be weak. Interacts with host PACS2. Interacts with host LCK and MAPK3; these interactions inhibit the kinase activity of the latter. Interacts with host ATP6V1H; this interaction may play a role in CD4 endocytosis. Associates with the CD4-Nef-AP2 complex; this complex is required for CD4 internalization. Interacts with host AP2 subunit alpha and AP2 subunit sigma2. Interacts with TCR-zeta chain; this interaction up-regulates the Fas ligand (FasL) surface expression. Interacts with host HCK, LYN, and SRC; these interactions activate the Src family kinases. Interacts with MAP3K5; this interaction inhibits the Fas and TNFR-mediated death signals. Interacts with beta-COP and PTE1. Interacts with human RACK1; this increases Nef phosphorylation by PKC. Interacts with TP53; this interaction decreases the half-life of TP53, protecting the infected cell against p53-mediated apoptosis. Post-translationally, the virion-associated Nef proteins are cleaved by the viral protease to release the soluble C-terminal core protein. Nef is probably cleaved concomitantly with viral structural proteins on maturation of virus particles. In terms of processing, myristoylated. Phosphorylated on serine residues, probably by host PKCdelta and theta.

The protein localises to the host cell membrane. It localises to the virion. The protein resides in the secreted. Its subcellular location is the host Golgi apparatus membrane. In terms of biological role, factor of infectivity and pathogenicity, required for optimal virus replication. Alters numerous pathways of T-lymphocyte function and down-regulates immunity surface molecules in order to evade host defense and increase viral infectivity. Alters the functionality of other immunity cells, like dendritic cells, monocytes/macrophages and NK cells. Its function is as follows. In infected CD4(+) T-lymphocytes, down-regulates the surface MHC-I, mature MHC-II, CD4, CD28, CCR5 and CXCR4 molecules. Mediates internalization and degradation of host CD4 through the interaction of with the cytoplasmic tail of CD4, the recruitment of AP-2 (clathrin adapter protein complex 2), internalization through clathrin coated pits, and subsequent transport to endosomes and lysosomes for degradation. Diverts host MHC-I molecules to the trans-Golgi network-associated endosomal compartments by an endocytic pathway to finally target them for degradation. MHC-I down-regulation may involve AP-1 (clathrin adapter protein complex 1) or possibly Src family kinase-ZAP70/Syk-PI3K cascade recruited by PACS2. In consequence infected cells are masked for immune recognition by cytotoxic T-lymphocytes. Decreasing the number of immune receptors also prevents reinfection by more HIV particles (superinfection). Down-regulates host SERINC3 and SERINC5 thereby excluding these proteins from the viral particles. Virion infectivity is drastically higher when SERINC3 or SERINC5 are excluded from the viral envelope, because these host antiviral proteins impair the membrane fusion event necessary for subsequent virion penetration. Functionally, bypasses host T-cell signaling by inducing a transcriptional program nearly identical to that of anti-CD3 cell activation. Interaction with TCR-zeta chain up-regulates the Fas ligand (FasL). Increasing surface FasL molecules and decreasing surface MHC-I molecules on infected CD4(+) cells send attacking cytotoxic CD8+ T-lymphocytes into apoptosis. Plays a role in optimizing the host cell environment for viral replication without causing cell death by apoptosis. Protects the infected cells from apoptosis in order to keep them alive until the next virus generation is ready to strike. Inhibits the Fas and TNFR-mediated death signals by blocking MAP3K5/ASK1. Decreases the half-life of TP53, protecting the infected cell against p53-mediated apoptosis. Inhibits the apoptotic signals regulated by the Bcl-2 family proteins through the formation of a Nef/PI3-kinase/PAK2 complex that leads to activation of PAK2 and induces phosphorylation of host BAD. In terms of biological role, extracellular Nef protein targets CD4(+) T-lymphocytes for apoptosis by interacting with CXCR4 surface receptors. This chain is Protein Nef, found in Human immunodeficiency virus type 1 group M subtype F1 (isolate VI850) (HIV-1).